The primary structure comprises 332 residues: Biotin synthase (332 aa).

Residues 52–282 (FPENEVEFCS…KAELRLCGGR (231 aa)) form the Radical SAM core domain. [4Fe-4S] cluster contacts are provided by Cys70, Cys74, and Cys77. [2Fe-2S] cluster-binding residues include Cys114, Cys147, Cys207, and Arg277.

Belongs to the radical SAM superfamily. Biotin synthase family. Homodimer. The cofactor is [4Fe-4S] cluster. [2Fe-2S] cluster is required as a cofactor.

It carries out the reaction (4R,5S)-dethiobiotin + (sulfur carrier)-SH + 2 reduced [2Fe-2S]-[ferredoxin] + 2 S-adenosyl-L-methionine = (sulfur carrier)-H + biotin + 2 5'-deoxyadenosine + 2 L-methionine + 2 oxidized [2Fe-2S]-[ferredoxin]. It functions in the pathway cofactor biosynthesis; biotin biosynthesis; biotin from 7,8-diaminononanoate: step 2/2. In terms of biological role, catalyzes the conversion of dethiobiotin (DTB) to biotin by the insertion of a sulfur atom into dethiobiotin via a radical-based mechanism. In Aquifex aeolicus (strain VF5), this protein is Biotin synthase.